The chain runs to 407 residues: Zinc finger protein 552 (407 aa).

Positions 14 to 90 (VTFEDVAVKF…PMAGVSPKKA (77 aa)) constitute a KRAB domain. The C2H2-type 1 zinc-finger motif lies at 91-113 (HPCEMCGPILGDILHVADHQGTH). A C2H2-type 2; degenerate zinc finger spans residues 119–141 (HRCEAWGNKLYDSGNFHQHQNEH). Glycyl lysine isopeptide (Lys-Gly) (interchain with G-Cter in SUMO2) cross-links involve residues Lys-176 and Lys-198. A C2H2-type 3; degenerate zinc finger spans residues 212 to 234 (YSCGGCMKHFSTKDILSQHERLL). The C2H2-type 4; degenerate zinc-finger motif lies at 244 to 262 (ECGKSSSKYDSFSNHQGVH). Residues Lys-251 and Lys-266 each participate in a glycyl lysine isopeptide (Lys-Gly) (interchain with G-Cter in SUMO2) cross-link. C2H2-type zinc fingers lie at residues 268–290 (YTCGICGKLFNSKSHLLVHQRIH), 296–318 (YECEVCQKFFRHKYHLIAHQRVH), 324–346 (YECSDCGKSFTHSSTFRVHKRVH), 352–374 (YECSECGKSFAESSSLTKHRRVH), and 380–402 (YGCSECEKKFRQISSLRHHQRVH). Lys-308 is covalently cross-linked (Glycyl lysine isopeptide (Lys-Gly) (interchain with G-Cter in SUMO2)).

This sequence belongs to the krueppel C2H2-type zinc-finger protein family.

It is found in the nucleus. In terms of biological role, may be involved in transcriptional regulation. This is Zinc finger protein 552 (ZNF552) from Homo sapiens (Human).